A 475-amino-acid chain; its full sequence is Phosphoglucosamine mutase (475 aa).

The Phosphoserine intermediate role is filled by S126. The Mg(2+) site is built by S126, D265, D267, and D269. S126 carries the post-translational modification Phosphoserine.

It belongs to the phosphohexose mutase family. Mg(2+) serves as cofactor. In terms of processing, activated by phosphorylation.

The enzyme catalyses alpha-D-glucosamine 1-phosphate = D-glucosamine 6-phosphate. In terms of biological role, catalyzes the conversion of glucosamine-6-phosphate to glucosamine-1-phosphate. The chain is Phosphoglucosamine mutase from Synechococcus sp. (strain ATCC 27144 / PCC 6301 / SAUG 1402/1) (Anacystis nidulans).